The following is a 279-amino-acid chain: Probable endonuclease 4 (279 aa).

Positions 69, 109, 145, 179, 182, 216, 229, 231, and 261 each coordinate Zn(2+).

The protein belongs to the AP endonuclease 2 family. It depends on Zn(2+) as a cofactor.

It carries out the reaction Endonucleolytic cleavage to 5'-phosphooligonucleotide end-products.. In terms of biological role, endonuclease IV plays a role in DNA repair. It cleaves phosphodiester bonds at apurinic or apyrimidinic (AP) sites, generating a 3'-hydroxyl group and a 5'-terminal sugar phosphate. The sequence is that of Probable endonuclease 4 from Chlorobium phaeovibrioides (strain DSM 265 / 1930) (Prosthecochloris vibrioformis (strain DSM 265)).